The chain runs to 333 residues: Biotin synthase (333 aa).

The Radical SAM core domain occupies 47–273; it reads YYGNKVKLNM…MNPTKEIRIA (227 aa). [4Fe-4S] cluster contacts are provided by C65, C69, and C72. [2Fe-2S] cluster contacts are provided by C109, C141, C201, and R271.

Belongs to the radical SAM superfamily. Biotin synthase family. In terms of assembly, homodimer. Requires [4Fe-4S] cluster as cofactor. The cofactor is [2Fe-2S] cluster.

It carries out the reaction (4R,5S)-dethiobiotin + (sulfur carrier)-SH + 2 reduced [2Fe-2S]-[ferredoxin] + 2 S-adenosyl-L-methionine = (sulfur carrier)-H + biotin + 2 5'-deoxyadenosine + 2 L-methionine + 2 oxidized [2Fe-2S]-[ferredoxin]. Its pathway is cofactor biosynthesis; biotin biosynthesis; biotin from 7,8-diaminononanoate: step 2/2. Its function is as follows. Catalyzes the conversion of dethiobiotin (DTB) to biotin by the insertion of a sulfur atom into dethiobiotin via a radical-based mechanism. This chain is Biotin synthase, found in Geobacillus kaustophilus (strain HTA426).